The sequence spans 244 residues: Venom nerve growth factor 1 (244 aa).

Positions 1–18 (MSMLCYTLIIAFLIGIWA) are cleaved as a signal peptide. Residues 19–125 (APKSEDNVPL…TLNRNIRAKR (107 aa)) constitute a propeptide that is removed on maturation. Residues 47 to 66 (GLKTSRNTDQRHPAPKKAED) are compositionally biased toward basic and acidic residues. The tract at residues 47 to 67 (GLKTSRNTDQRHPAPKKAEDQ) is disordered. Intrachain disulfides connect Cys139–Cys205, Cys181–Cys233, and Cys193–Cys235.

Belongs to the NGF-beta family. In terms of assembly, homodimer; non-covalently linked. In terms of tissue distribution, expressed by the venom gland.

It localises to the secreted. Functionally, nerve growth factor is important for the development and maintenance of the sympathetic and sensory nervous systems. It stimulates division and differentiation of sympathetic and embryonic sensory neurons as well as basal forebrain cholinergic neurons in the brain. Its relevance in the snake venom is not clear. However, it has been shown to inhibit metalloproteinase-dependent proteolysis of platelet glycoprotein Ib alpha, suggesting a metalloproteinase inhibition to prevent metalloprotease autodigestion and/or protection against prey proteases. Binds a lipid between the two protein chains in the homodimer. The lipid-bound form promotes histamine relase from mouse mast cells, contrary to the lipid-free form. The polypeptide is Venom nerve growth factor 1 (Notechis scutatus scutatus (Mainland tiger snake)).